The following is an 83-amino-acid chain: DNA-directed RNA polymerase subunit Rpo5 (83 aa).

The protein belongs to the archaeal Rpo5/eukaryotic RPB5 RNA polymerase subunit family. Part of the RNA polymerase complex.

Its subcellular location is the cytoplasm. It carries out the reaction RNA(n) + a ribonucleoside 5'-triphosphate = RNA(n+1) + diphosphate. In terms of biological role, DNA-dependent RNA polymerase (RNAP) catalyzes the transcription of DNA into RNA using the four ribonucleoside triphosphates as substrates. The chain is DNA-directed RNA polymerase subunit Rpo5 from Metallosphaera sedula (strain ATCC 51363 / DSM 5348 / JCM 9185 / NBRC 15509 / TH2).